A 180-amino-acid chain; its full sequence is Oligoribonuclease (180 aa).

In terms of domain architecture, Exonuclease spans 7–170 (LIWIDLEMTG…SDIQDSIDEL (164 aa)). The active site involves tyrosine 128.

The protein belongs to the oligoribonuclease family.

The protein resides in the cytoplasm. Its function is as follows. 3'-to-5' exoribonuclease specific for small oligoribonucleotides. The chain is Oligoribonuclease from Ruthia magnifica subsp. Calyptogena magnifica.